Here is a 295-residue protein sequence, read N- to C-terminus: MREVVELYKRIGGFQALHVAQAYEVLKEALGEADVRFFSFTGNLVATGLREIIAEALRERLFNVVVTTAGALDHDIAKAMGASYRPGSFDLDDYELAEKGLHRLGNVVISREEYGPYVEKFVLQRCERLWGRSLATYELAEEFGRDLPEDSILGAAARAGVKVFVPGIVDGAVGTALLTCNDLARVRRGGARLVVDVLKDEEALREIVHGGKRLAALIVGGGISKHHVIWWAQFKGGLDYVVYISTAVEYDGSLSGARPREAVSWGKVKPTAKSVYVYADATLVLPILLKALCGK.

Lys-267 serves as the catalytic Nucleophile.

Belongs to the deoxyhypusine synthase family. NAD(+) is required as a cofactor.

It carries out the reaction [eIF5A protein]-L-lysine + spermidine = [eIF5A protein]-deoxyhypusine + propane-1,3-diamine. Its pathway is protein modification; eIF5A hypusination. In terms of biological role, catalyzes the NAD-dependent oxidative cleavage of spermidine and the subsequent transfer of the butylamine moiety of spermidine to the epsilon-amino group of a specific lysine residue of the eIF-5A precursor protein to form the intermediate deoxyhypusine residue. In Pyrobaculum calidifontis (strain DSM 21063 / JCM 11548 / VA1), this protein is Probable deoxyhypusine synthase.